The primary structure comprises 295 residues: Undecaprenyl-diphosphatase (295 aa).

7 consecutive transmembrane segments (helical) span residues 12–34 (IAIAILQGATELFPVSSLGHAVV), 50–70 (FLPFLVFLHLGTAAALLLYFW), 95–115 (IFMLLVVATLPAIVVGGLLEH), 120–140 (LFESAPIAAFFLVVNGGLLLF), 209–229 (AHFSFLIALPIILGATVLEVP), 243–263 (TAALAAVAAGITAWLSTAFLM), and 272–292 (WALKPFAFYCIIAGLGALAWL).

Belongs to the UppP family.

The protein resides in the cell inner membrane. It carries out the reaction di-trans,octa-cis-undecaprenyl diphosphate + H2O = di-trans,octa-cis-undecaprenyl phosphate + phosphate + H(+). Functionally, catalyzes the dephosphorylation of undecaprenyl diphosphate (UPP). Confers resistance to bacitracin. This is Undecaprenyl-diphosphatase from Granulibacter bethesdensis (strain ATCC BAA-1260 / CGDNIH1).